The primary structure comprises 1303 residues: MENFVLYEEIGRGSRTVVYKGRRKGTINFVAILCTEKCKRPEITNWVRLTHEIKHKNIVTFHEWYETSNHLWLVVELCTGGSLETVIAQDENLPEDVVREFGVDLVTGLHHLHRLGILFCDLSPGKILLEGPGTLKFSNFCLAKVAGESLEEFFALVAAEEGGGDSGENALKKSMKTRVRGSLIYAAPEIVKGTEFSVTSDLWSLGCLLYEMFSGKPPFFSETVSELVEKILYEDPLPPIPKDSSFPKASSDFLNLLDGLLQKDPQKRFSWEGVLQHPFWKDALRGEDSGWASEDSPFSRNVMECSGPHDSRELLQSPKNGQAKGQKAAHRLSQSFRLENPTELRPKSIMGGQLNESIFLLSSRPTPRTSAMVELNPGEGEDPSSPQKTSPLSKMTSGHLSQGALESQMRELIYTDSDLVITPIIDNPKIMKQPAIKFDPKILHLPAYSVEKLLVLKDQDWNDFLQQVCSQIDSSEKSTGALRAKLNLLCYLCVVATHKEVATRLLHSPLFQLLIQHLRIAPNWDIRSKVARVVGMLALHTTELQENVPVIEAITLLTELIRENFRSGKLKQCLLPTLGQLLYLVATQEEKNQHSRDCWAVPLAAYTVLMRCLREGEERVVNHMAAKIIENVCTTFSAQAQGFTTGEIGPVLWHLFRHSTVDALRITAISALCRITRQSPTAFQNVIEKVGLNAVISSLASAICKVQQYMLTLFTAMLSCGIHLQRLIQEKDFVSTVIRLLDSPSTPIRAKAFLVLLYILIHNRDMLLLSCQARLVMYIERDSRKTSPGKEQQSGNEYLARCLDLLIQHMVQEPPRILGDILNALANVSGRKHPSTVQGKQLKMCLPMMPVVLHLVMSQVFRPQVVTEEFLFSYGTILSHIKSIDLGETNIDGAIGIVASEEFIKVTLSAFEAVIQYPVLLADYRSTVMDYILPPLVSLVQSQNVEWRLFSLRLLSETTTLLVSQEPEDGDEEASCDSDSSLLALIRDELLPQYEHILMEPDPVPAYALKLLVAMTEHNPAFTRLVEESKLVPLIFEVILEHQESILGNTMQSVIALLNNLVAYKDSNMQLLYEQGLVGHVCNMFTETATLCLDRDNKTNTEPASTLLASLLDILLGMLTYTSRIVRQALQVQKSGSRGDTQAAEDLLLLSKPLTDLISLLIPLLPSEDPEISEVSSKCLSILVQLYGGENPESLSPENMVTFANLLMTKEDPKDQKLLLRILKRMVTSNERLLESLKNTGSLLQALERLAPAHRLRGPWAGISCALFQQRAAAQGIPELPPYGIPCCGPSHKRVTGVKLYPC.

One can recognise a Protein kinase domain in the interval 4–280 (FVLYEEIGRG…WEGVLQHPFW (277 aa)). Asp121 (proton acceptor) is an active-site residue. 2 disordered regions span residues 304–332 (ECSGPHDSRELLQSPKNGQAKGQKAAHRL) and 369–401 (TSAMVELNPGEGEDPSSPQKTSPLSKMTSGHLS). Residues 384 to 400 (SSPQKTSPLSKMTSGHL) are compositionally biased toward polar residues. HEAT repeat units follow at residues 504–543 (RLLHSPLFQLLIQHLRIAPNWDIRSKVARVVGMLALHTTE), 727–765 (LIQEKDFVSTVIRLLDSPSTPIRAKAFLVLLYILIHNRD), 796–834 (NEYLARCLDLLIQHMVQEPPRILGDILNALANVSGRKHP), 926–964 (STVMDYILPPLVSLVQSQNVEWRLFSLRLLSETTTLLVS), 1025–1063 (LVEESKLVPLIFEVILEHQESILGNTMQSVIALLNNLVA), 1105–1143 (STLLASLLDILLGMLTYTSRIVRQALQVQKSGSRGDTQA), and 1151–1189 (SKPLTDLISLLIPLLPSEDPEISEVSSKCLSILVQLYGG).

It belongs to the protein kinase superfamily. Ser/Thr protein kinase family. APG1/unc-51/ULK1 subfamily. As to expression, expressed in embryonic and adult brain. In the brain, widely expressed, with highest levels in layers II/III and V of the cortex, piriform cortex, CA1-3 of hippocampus, dentate gyrus, ependymal cells lining the ventricles and choroid plexus, and in the thalamic reticular nucleus (at protein level).

It catalyses the reaction L-seryl-[protein] + ATP = O-phospho-L-seryl-[protein] + ADP + H(+). The catalysed reaction is L-threonyl-[protein] + ATP = O-phospho-L-threonyl-[protein] + ADP + H(+). In terms of biological role, may be involved in the remodeling of cytoskeletal components, such as alpha-tubulin, and in this way regulates neurite branching and elongation, as well as cell motility. The polypeptide is Serine/threonine-protein kinase ULK4 (Ulk4) (Mus musculus (Mouse)).